A 95-amino-acid chain; its full sequence is Large ribosomal subunit protein bL21 (95 aa).

This sequence belongs to the bacterial ribosomal protein bL21 family. In terms of assembly, part of the 50S ribosomal subunit. Contacts protein L20.

In terms of biological role, this protein binds to 23S rRNA in the presence of protein L20. In Rubrobacter xylanophilus (strain DSM 9941 / JCM 11954 / NBRC 16129 / PRD-1), this protein is Large ribosomal subunit protein bL21.